The primary structure comprises 184 residues: Major urinary protein 3 (184 aa).

A signal peptide spans 1–22; sequence MKLLLPLLLLLCLELTLVCIHA. Residue asparagine 66 is glycosylated (N-linked (GlcNAc...) asparagine). Cysteine 86 and cysteine 179 form a disulfide bridge.

The protein belongs to the calycin superfamily. Lipocalin family. Glycosylated. Abundant in the urine of adult male mice but absent from that of females.

Its subcellular location is the secreted. Functionally, binds pheromones that are released from drying urine of males. These pheromones affect the sexual behavior of females. This Mus musculus (Mouse) protein is Major urinary protein 3 (Mup3).